Consider the following 135-residue polypeptide: Transcription antitermination protein NusB (135 aa).

This sequence belongs to the NusB family.

Its function is as follows. Involved in transcription antitermination. Required for transcription of ribosomal RNA (rRNA) genes. Binds specifically to the boxA antiterminator sequence of the ribosomal RNA (rrn) operons. The protein is Transcription antitermination protein NusB of Nocardioides sp. (strain ATCC BAA-499 / JS614).